We begin with the raw amino-acid sequence, 337 residues long: Fructose-1,6-bisphosphatase class 1 (337 aa).

Mg(2+) contacts are provided by Glu90, Asp112, Leu114, and Asp115. Substrate is bound by residues 115-118 (DGSS), Asn211, and Lys277. Mg(2+) is bound at residue Glu283.

This sequence belongs to the FBPase class 1 family. In terms of assembly, homotetramer. It depends on Mg(2+) as a cofactor.

The protein resides in the cytoplasm. The catalysed reaction is beta-D-fructose 1,6-bisphosphate + H2O = beta-D-fructose 6-phosphate + phosphate. It participates in carbohydrate biosynthesis; gluconeogenesis. The polypeptide is Fructose-1,6-bisphosphatase class 1 (Azotobacter vinelandii (strain DJ / ATCC BAA-1303)).